Here is an 870-residue protein sequence, read N- to C-terminus: Patatin-like phospholipase domain-containing protein NCU11180 (870 aa).

Disordered regions lie at residues 1–24 (MADDTDNPPNIQIPAKSYGFPPEA) and 131–158 (KVIKTDRDEKRNKRGKDRKNKKPRKGVA). Residues 131–141 (KVIKTDRDEKR) are compositionally biased toward basic and acidic residues. The segment covering 142–155 (NKRGKDRKNKKPRK) has biased composition (basic residues). A helical membrane pass occupies residues 183 to 203 (WPFLLFVSFWIVGLGMAYLAT). Residues 281 to 320 (EEVERELESQSQNSDSGVASGEETSNTKAGGGNNGNDKKT) form a disordered region. Polar residues predominate over residues 289-308 (SQSQNSDSGVASGEETSNTK). Residues 399–590 (LCLSGGATFA…RTDIPIKSLN (192 aa)) form the PNPLA domain. Positions 430–434 (GTSGG) match the GXSXG motif. Ser432 acts as the Nucleophile in catalysis. The Proton acceptor role is filled by Asp577. 2 disordered regions span residues 735–786 (RRET…DRRG) and 804–870 (GREG…HSRT). The span at 818 to 834 (TEDELTMTELEGEDDDG) shows a compositional bias: acidic residues.

The protein belongs to the PLPL family.

Its subcellular location is the membrane. In terms of biological role, probable lipid hydrolase. This chain is Patatin-like phospholipase domain-containing protein NCU11180, found in Neurospora crassa (strain ATCC 24698 / 74-OR23-1A / CBS 708.71 / DSM 1257 / FGSC 987).